The primary structure comprises 48 residues: Large ribosomal subunit protein bL32 (48 aa).

Over residues Met-1–Tyr-20 the composition is skewed to basic residues. The interval Met-1–Tyr-48 is disordered.

It belongs to the bacterial ribosomal protein bL32 family.

This is Large ribosomal subunit protein bL32 from Campylobacter jejuni subsp. doylei (strain ATCC BAA-1458 / RM4099 / 269.97).